The sequence spans 79 residues: DNA gyrase inhibitor YacG (79 aa).

4 residues coordinate Zn(2+): Cys7, Cys10, Cys26, and Cys30.

The protein belongs to the DNA gyrase inhibitor YacG family. Interacts with GyrB. The cofactor is Zn(2+).

In terms of biological role, inhibits all the catalytic activities of DNA gyrase by preventing its interaction with DNA. Acts by binding directly to the C-terminal domain of GyrB, which probably disrupts DNA binding by the gyrase. The chain is DNA gyrase inhibitor YacG from Shewanella halifaxensis (strain HAW-EB4).